The chain runs to 511 residues: Mannosyl-oligosaccharide alpha-1,2-mannosidase (511 aa).

An N-terminal signal peptide occupies residues 1 to 35 (MRLPVSFPLTVLSLLGSTIAHPYGETEAVLRSEPK). N182 carries an N-linked (GlcNAc...) asparagine glycan. Cysteines 332 and 361 form a disulfide. The N-linked (GlcNAc...) asparagine glycan is linked to N366. The active-site Proton donor is the D375. N438 carries N-linked (GlcNAc...) asparagine glycosylation. T501 is a Ca(2+) binding site.

It belongs to the glycosyl hydrolase 47 family. Homodimer. Ca(2+) serves as cofactor.

The protein resides in the secreted. The enzyme catalyses N(4)-(alpha-D-Man-(1-&gt;2)-alpha-D-Man-(1-&gt;2)-alpha-D-Man-(1-&gt;3)-[alpha-D-Man-(1-&gt;2)-alpha-D-Man-(1-&gt;3)-[alpha-D-Man-(1-&gt;2)-alpha-D-Man-(1-&gt;6)]-alpha-D-Man-(1-&gt;6)]-beta-D-Man-(1-&gt;4)-beta-D-GlcNAc-(1-&gt;4)-beta-D-GlcNAc)-L-asparaginyl-[protein] (N-glucan mannose isomer 9A1,2,3B1,2,3) + 4 H2O = N(4)-(alpha-D-Man-(1-&gt;3)-[alpha-D-Man-(1-&gt;3)-[alpha-D-Man-(1-&gt;6)]-alpha-D-Man-(1-&gt;6)]-beta-D-Man-(1-&gt;4)-beta-D-GlcNAc-(1-&gt;4)-beta-D-GlcNAc)-L-asparaginyl-[protein] (N-glucan mannose isomer 5A1,2) + 4 beta-D-mannose. It carries out the reaction N(4)-(alpha-D-Man-(1-&gt;2)-alpha-D-Man-(1-&gt;2)-alpha-D-Man-(1-&gt;3)-[alpha-D-Man-(1-&gt;3)-[alpha-D-Man-(1-&gt;2)-alpha-D-Man-(1-&gt;6)]-alpha-D-Man-(1-&gt;6)]-beta-D-Man-(1-&gt;4)-beta-D-GlcNAc-(1-&gt;4)-beta-D-GlcNAc)-L-asparaginyl-[protein] (N-glucan mannose isomer 8A1,2,3B1,3) + 3 H2O = N(4)-(alpha-D-Man-(1-&gt;3)-[alpha-D-Man-(1-&gt;3)-[alpha-D-Man-(1-&gt;6)]-alpha-D-Man-(1-&gt;6)]-beta-D-Man-(1-&gt;4)-beta-D-GlcNAc-(1-&gt;4)-beta-D-GlcNAc)-L-asparaginyl-[protein] (N-glucan mannose isomer 5A1,2) + 3 beta-D-mannose. The protein operates within protein modification; protein glycosylation. In terms of biological role, involved in the maturation of Asn-linked oligosaccharides. Progressively trim alpha-1,2-linked mannose residues from Man(9)GlcNAc(2) to produce Man(5)GlcNAc(2). The polypeptide is Mannosyl-oligosaccharide alpha-1,2-mannosidase (MSDC) (Penicillium citrinum).